Consider the following 160-residue polypeptide: 6,7-dimethyl-8-ribityllumazine synthase (160 aa).

5-amino-6-(D-ribitylamino)uracil is bound by residues tryptophan 27, 59–61, and 81–83; these read AIE and VVI. A (2S)-2-hydroxy-3-oxobutyl phosphate-binding site is contributed by 86–87; that stretch reads QT. Histidine 89 (proton donor) is an active-site residue. Asparagine 114 contacts 5-amino-6-(D-ribitylamino)uracil. Residue arginine 128 participates in (2S)-2-hydroxy-3-oxobutyl phosphate binding.

This sequence belongs to the DMRL synthase family. In terms of assembly, homopentamer.

It carries out the reaction (2S)-2-hydroxy-3-oxobutyl phosphate + 5-amino-6-(D-ribitylamino)uracil = 6,7-dimethyl-8-(1-D-ribityl)lumazine + phosphate + 2 H2O + H(+). It participates in cofactor biosynthesis; riboflavin biosynthesis; riboflavin from 2-hydroxy-3-oxobutyl phosphate and 5-amino-6-(D-ribitylamino)uracil: step 1/2. In terms of biological role, catalyzes the formation of 6,7-dimethyl-8-ribityllumazine by condensation of 5-amino-6-(D-ribitylamino)uracil with 3,4-dihydroxy-2-butanone 4-phosphate. This is the penultimate step in the biosynthesis of riboflavin. The polypeptide is 6,7-dimethyl-8-ribityllumazine synthase (ribH) (Mycobacterium tuberculosis (strain CDC 1551 / Oshkosh)).